The sequence spans 208 residues: Small ribosomal subunit protein uS4 (208 aa).

The 64-residue stretch at 98–161 (QRLDNLVYRM…KNNPQILRAV (64 aa)) folds into the S4 RNA-binding domain.

This sequence belongs to the universal ribosomal protein uS4 family. As to quaternary structure, part of the 30S ribosomal subunit. Contacts protein S5. The interaction surface between S4 and S5 is involved in control of translational fidelity.

One of the primary rRNA binding proteins, it binds directly to 16S rRNA where it nucleates assembly of the body of the 30S subunit. Its function is as follows. With S5 and S12 plays an important role in translational accuracy. The chain is Small ribosomal subunit protein uS4 from Campylobacter hominis (strain ATCC BAA-381 / DSM 21671 / CCUG 45161 / LMG 19568 / NCTC 13146 / CH001A).